A 265-amino-acid chain; its full sequence is Orotidine 5'-phosphate decarboxylase (265 aa).

Residues Asp-38, 60 to 62 (KTH), 91 to 100 (DRKFADIGNT), Tyr-213, and Arg-232 contribute to the substrate site. Lys-93 (proton donor) is an active-site residue.

The protein belongs to the OMP decarboxylase family.

The catalysed reaction is orotidine 5'-phosphate + H(+) = UMP + CO2. The protein operates within pyrimidine metabolism; UMP biosynthesis via de novo pathway; UMP from orotate: step 2/2. This Rhizopus oryzae (Mucormycosis agent) protein is Orotidine 5'-phosphate decarboxylase (pyrG).